A 347-amino-acid chain; its full sequence is Subtilase cytotoxin subunit A (347 aa).

Positions methionine 1–alanine 21 are cleaved as a signal peptide. One can recognise a Peptidase S8 domain in the interval proline 24–isoleucine 327. Active-site charge relay system residues include aspartate 52, histidine 89, and serine 272. Cysteine 288 and cysteine 331 are oxidised to a cystine. The segment at asparagine 322 to leucine 347 is A2 domain. The Prevents secretion from ER motif lies at serine 344–leucine 347.

This sequence belongs to the peptidase S8 family. In terms of assembly, forms a complex with SubB with the stoichiometry SubA1:SubB5 (called SubAB5).

The protein resides in the secreted. The protein localises to the host cytoplasm. It is found in the host cytosol. Its subcellular location is the host endoplasmic reticulum lumen. Functionally, protease subunit of subtilase cytotoxin SubAB5. An endoprotease specific for host endoplasmic reticulum (ER) chaperone BiP/HSPA5, has no activity on human HSP70 or HSPA8. Cleaves between 'Leu-416' and 'Leu-417' of BiP/HSPA5 in the hinge between BiP's ATPase and protein-binding domains. This induces host ER stress response and eventual cell death. Culture supernatant of E.coli expressing both subA and subB are toxic for Vero cells (African green monkey kidney cell line), Chinese hamster ovary cells and Hct-8 cells (human colonic epithelial cell line); the subunits are not toxic individually. Purified SubAB5 is highly toxic, &lt;0.1 pg is able to kill at least 50% of 30'000 Vero cells in a microtiter plate assay after 3 days; no cytotoxicity is seen at 24 hours. Preabsorption with cells expressing a ganglioside GM2 mimic reduced cytotoxicity of SubAB5 by 93% in the Vero cytotoxicity assay. Intraperitoneal injection of 200 ng of purified SubAB5 kills mice; the higher the dose the faster the mice die. Animals injected intraperitoneally with purified SubAB5 have microvascular thrombi in the brain and other organs, including the renal tubules and glomeruli. Injection induces an unfolded response in mice. Mice fed E.coli cells expressing cloned SubAB5 experience drastic weight loss and appear ill and lethargic. Protein synthesis in Vero cells is transiently inhibited by SubAB5; both subunits are required for this effect. Inhibition of protein synthesis is prevented by brefeldin A; cells are arrested in the G1 phase. SubAB5 at 100 ng/ml induced caspase-dependent apoptosis in Vero cells through mitochondrial membrane damage. The polypeptide is Subtilase cytotoxin subunit A (Escherichia coli).